Consider the following 233-residue polypeptide: Clathrin light chain (233 aa).

The tract at residues 1–124 is disordered; that stretch reads MSEKFPPLED…EDRSEVVDQW (124 aa). The segment covering 17–43 has biased composition (basic and acidic residues); the sequence is PNDKKDDDTDFLKREAEILGDEFKTEQ. At threonine 49 the chain carries Phosphothreonine. Serine 52 is subject to Phosphoserine. The span at 56–67 shows a compositional bias: acidic residues; the sequence is DDDEIRDFEEQF. Positions 69–92 are enriched in polar residues; it reads DINSANGAVSSDQNGSATVSSGND. Positions 112 to 124 are enriched in basic and acidic residues; that stretch reads SVKEDRSEVVDQW. A coiled-coil region spans residues 125–186; that stretch reads KQRRAVEIHE…EAFLKKRDEF (62 aa). Residues 144-204 are involved in binding clathrin heavy chain; the sequence is KELQDEAIKH…DRALQLINQD (61 aa).

It belongs to the clathrin light chain family. Clathrin coats are formed from molecules containing 3 heavy chains and 3 light chains. Interacts with the auxilin-like clathrin uncoating factor SWA2.

It is found in the cytoplasmic vesicle membrane. It localises to the membrane. The protein resides in the coated pit. Functionally, clathrin is the major protein of the polyhedral coat of coated pits and vesicles. In yeast, it is involved in the retention of proteins in an intracellular membrane compartment, presumably the trans-Golgi. The yeast light chain is important for cell growth. The light chain may help to properly orient the assembly/ disassembly of the clathrin coats. This chain is Clathrin light chain (CLC1), found in Saccharomyces cerevisiae (strain ATCC 204508 / S288c) (Baker's yeast).